Reading from the N-terminus, the 282-residue chain is MAEITASLVKELRERTGAGMMECKKALVEANGDIELAIDNMRKSGQAKAAKKAGRVAAEGVILARIGAGFGVLVEMNCETDFVAKDAGFLGLANEVADYALANKGVTIEALQAQFEEKRATLVAKIGENMNIRRVQFLDGDVVGSYLHGAKIGVLVAGKNADEDLLKKIAMHVAASRPEFVKPEDVSADVVAKEREIQVAIAMESGKPREIAEKMVEGRMKKFTGEVSLTGQPFVMDPAKSVGEFLKESGADVTNFVRFEVGEGIEKVESDFAAEVAAMQKI.

An involved in Mg(2+) ion dislocation from EF-Tu region spans residues 80–83 (TDFV).

Belongs to the EF-Ts family.

The protein localises to the cytoplasm. Associates with the EF-Tu.GDP complex and induces the exchange of GDP to GTP. It remains bound to the aminoacyl-tRNA.EF-Tu.GTP complex up to the GTP hydrolysis stage on the ribosome. This Pasteurella multocida (strain Pm70) protein is Elongation factor Ts (tsf).